A 709-amino-acid chain; its full sequence is SH3 domain-containing kinase-binding protein 1 (709 aa).

2 consecutive SH3 domains span residues 1–58 (MVEA…EIKK) and 98–157 (RRRR…ELSG). Phosphoserine is present on residues serine 156, serine 159, serine 227, and serine 274. Over residues 221–239 (ETTGSESDGGDSSSTKSEG) the composition is skewed to low complexity. The segment at 221 to 242 (ETTGSESDGGDSSSTKSEGANG) is disordered. 3 disordered regions span residues 289–309 (GKKLPPATSTPDPSKTEMDSR), 372–485 (SDFD…KIDL), and 511–650 (DSVI…VSSQ). Residue threonine 298 is modified to Phosphothreonine. An SH3 3 domain is found at 311–372 (KTKDYCKVIF…PDNFVKLLPS (62 aa)). Residues 399–434 (TERKHEIKKIPPERPETLPNRTEEKERPEREPKLDL) show a composition bias toward basic and acidic residues. Serine 480 is subject to Phosphoserine. Residues 513-528 (VISSTEKLSHPTTSRP) are compositionally biased toward polar residues. The span at 535–554 (PPSQSLTSSSLSSPDIFDSP) shows a compositional bias: low complexity. Residues serine 553, serine 555, and serine 565 each carry the phosphoserine modification. Residues 561–575 (EEHISLAHRGIDVSK) are compositionally biased toward basic and acidic residues. Residues 579–592 (KTVTISQVSDNKTS) are compositionally biased toward polar residues. Over residues 600 to 623 (MAAASSGPASLSSVASSPMSSSLG) the composition is skewed to low complexity. Positions 627–636 (QRASSPSLFS) are enriched in polar residues. Serine 631 bears the Phosphoserine mark. Residues 646–708 (AVSSQAAIEE…VNDIKKALQS (63 aa)) adopt a coiled-coil conformation.

In terms of assembly, can self-associate and form homotetramers. Interacts with CD2, F-actin capping protein, PIK3R3, GRB2, EGFR, MET, BLNK, MAP3K4, PDCD6IP, SPRY2, ARHGAP17, ARHGAP27, CRK, BCAR1, SOS1, ASAP1, ARAP3, HIP1R, SYNJ2, INPP5D and STAP1. Interacts with E3 ubiquitin-protein ligase CBL. Interacts with CBLB, but does not interact with CBLC. Two molecules of SH3KBP1 seem to bind through their respective SH3 1 domain to one molecule of CBLB. The interaction with CBL or CBLB and EGFR is increased upon EGF stimulation. The interaction with CBL is attenuated by PDCD6IP. Interacts (via SH3 domains) with ARAP1. The interaction is independent of EGF and does not affect ARAP1 GTPase-activating activity but is involved in regulating ubiquitination and endocytic trafficking of EGFR. ARAP1 competes with CBL for binding to SH3KBP1 and prevents interaction of CBL with SH3KBP1; this is likely to regulate SH3KBP1-mediated internalization of EGFR. Interacts through its proline-rich region with the SH3 domain of endophilins SH3GL1, SH3GL2 and SH3GL3. The SH3KBP1-endophilin complex seems to associate with a complex containing the phosphorylated receptor (EGFR or MET) and phosphorylated CBL. Probably associates with ASAP1 and phosphorylated EGFR. Probably part of a complex consisting of at least SH3KBP1, ASAP1 and ARAP3. Interacts with focal adhesion kinases PTK2/FAK1 and PTK2B/PYK2, probably as a dimer. Interacts with DAB2 and probably associates with chathrin through its interaction with DAB2. Part of a complex consisting of SH3KBP1, DAB2, and clathrin heavy chain. DAB2 and clathrin dissociate from SH3KBP1 following growth factor treatment, enabling interaction with CBL. Interacts with DDN and probably associates with MAGI2 through its interaction with DDN. Interacts with the SH3 domains of SRC tyrosine-protein kinases SRC, LCK, LYN, FGR, FYN and HCK. Interacts with TRADD, BIRC2, TRAF1, TRAF2 and TNFR1, and the association with a TNFR1-associated complex upon stimulation with TNF-alpha seems to be mediated by SRC. Probably part of a complex consisting of at least SH3KBP1, ASAP1 and ARAP3. Interacts (via SH3 domains) with SHKBP1 (via PXXXPR motifs). Interacts with ATX2. Interaction with CBL is abolished in the presence of SHKBP1. Interacts (via SH3 domains) with ZFP36 (via extreme C-terminal region). Interacts with MAP3K4; this interaction enhances the association with ZFP36. Monoubiquitinated by CBL and CBLB after EGF stimulation; probably on its C-terminus.

It is found in the cytoplasm. The protein resides in the cytoskeleton. The protein localises to the cytoplasmic vesicle membrane. It localises to the synapse. Its subcellular location is the synaptosome. It is found in the cell junction. The protein resides in the focal adhesion. In terms of biological role, adapter protein involved in regulating diverse signal transduction pathways. Involved in the regulation of endocytosis and lysosomal degradation of ligand-induced receptor tyrosine kinases, including EGFR and MET/hepatocyte growth factor receptor, through an association with CBL and endophilins. The association with CBL, and thus the receptor internalization, may be inhibited by an interaction with PDCD6IP and/or SPRY2. Involved in regulation of ligand-dependent endocytosis of the IgE receptor. Attenuates phosphatidylinositol 3-kinase activity by interaction with its regulatory subunit. May be involved in regulation of cell adhesion; promotes the interaction between TTK2B and PDCD6IP. May be involved in the regulation of cellular stress response via the MAPK pathways through its interaction with MAP3K4. Is involved in modulation of tumor necrosis factor mediated apoptosis. Plays a role in the regulation of cell morphology and cytoskeletal organization. Required in the control of cell shape and migration. Has an essential role in the stimulation of B cell activation. In Mus musculus (Mouse), this protein is SH3 domain-containing kinase-binding protein 1 (Sh3kbp1).